A 428-amino-acid chain; its full sequence is Bifunctional protein GlmU (428 aa).

The interval 1–221 (MDIVILAAGC…ERKAMGINTR (221 aa)) is pyrophosphorylase. Residues 6 to 9 (LAAG), Lys20, Gln74, 79 to 80 (GT), 103 to 105 (YGD), Gly140, and Asn219 each bind UDP-N-acetyl-alpha-D-glucosamine. Residue Asp105 coordinates Mg(2+). Asn219 serves as a coordination point for Mg(2+). The interval 222–242 (ADLAIAESYFQCMKRASFLQS) is linker. The interval 243–428 (GVTLTSPDQV…TTKPEYKTRR (186 aa)) is N-acetyltransferase. Arg308 and Lys326 together coordinate UDP-N-acetyl-alpha-D-glucosamine. His338 acts as the Proton acceptor in catalysis. Residues Tyr341 and Asn352 each coordinate UDP-N-acetyl-alpha-D-glucosamine. Residues Ala355, 361–362 (NY), Ala398, and Arg415 contribute to the acetyl-CoA site.

The protein in the N-terminal section; belongs to the N-acetylglucosamine-1-phosphate uridyltransferase family. In the C-terminal section; belongs to the transferase hexapeptide repeat family. In terms of assembly, homotrimer. Mg(2+) is required as a cofactor.

Its subcellular location is the cytoplasm. It catalyses the reaction alpha-D-glucosamine 1-phosphate + acetyl-CoA = N-acetyl-alpha-D-glucosamine 1-phosphate + CoA + H(+). The enzyme catalyses N-acetyl-alpha-D-glucosamine 1-phosphate + UTP + H(+) = UDP-N-acetyl-alpha-D-glucosamine + diphosphate. It participates in nucleotide-sugar biosynthesis; UDP-N-acetyl-alpha-D-glucosamine biosynthesis; N-acetyl-alpha-D-glucosamine 1-phosphate from alpha-D-glucosamine 6-phosphate (route II): step 2/2. Its pathway is nucleotide-sugar biosynthesis; UDP-N-acetyl-alpha-D-glucosamine biosynthesis; UDP-N-acetyl-alpha-D-glucosamine from N-acetyl-alpha-D-glucosamine 1-phosphate: step 1/1. The protein operates within bacterial outer membrane biogenesis; LPS lipid A biosynthesis. In terms of biological role, catalyzes the last two sequential reactions in the de novo biosynthetic pathway for UDP-N-acetylglucosamine (UDP-GlcNAc). The C-terminal domain catalyzes the transfer of acetyl group from acetyl coenzyme A to glucosamine-1-phosphate (GlcN-1-P) to produce N-acetylglucosamine-1-phosphate (GlcNAc-1-P), which is converted into UDP-GlcNAc by the transfer of uridine 5-monophosphate (from uridine 5-triphosphate), a reaction catalyzed by the N-terminal domain. The sequence is that of Bifunctional protein GlmU from Anaplasma marginale (strain Florida).